The primary structure comprises 486 residues: Siroheme synthase (486 aa).

Positions 1-204 (MNYLPIFVDL…HQIEQAEALV (204 aa)) are precorrin-2 dehydrogenase /sirohydrochlorin ferrochelatase. Residues 22–23 (HV) and 43–44 (EK) contribute to the NAD(+) site. At serine 128 the chain carries Phosphoserine. The segment at 216–486 (GEVSLVGAGP…NKETHWKQAA (271 aa)) is uroporphyrinogen-III C-methyltransferase. S-adenosyl-L-methionine is bound at residue proline 225. The active-site Proton acceptor is the aspartate 248. The Proton donor role is filled by lysine 270. S-adenosyl-L-methionine contacts are provided by residues 301-303 (GGD), valine 306, 331-332 (TA), methionine 383, and glycine 412.

In the N-terminal section; belongs to the precorrin-2 dehydrogenase / sirohydrochlorin ferrochelatase family. This sequence in the C-terminal section; belongs to the precorrin methyltransferase family.

The enzyme catalyses uroporphyrinogen III + 2 S-adenosyl-L-methionine = precorrin-2 + 2 S-adenosyl-L-homocysteine + H(+). It carries out the reaction precorrin-2 + NAD(+) = sirohydrochlorin + NADH + 2 H(+). It catalyses the reaction siroheme + 2 H(+) = sirohydrochlorin + Fe(2+). Its pathway is cofactor biosynthesis; adenosylcobalamin biosynthesis; precorrin-2 from uroporphyrinogen III: step 1/1. It functions in the pathway cofactor biosynthesis; adenosylcobalamin biosynthesis; sirohydrochlorin from precorrin-2: step 1/1. It participates in porphyrin-containing compound metabolism; siroheme biosynthesis; precorrin-2 from uroporphyrinogen III: step 1/1. The protein operates within porphyrin-containing compound metabolism; siroheme biosynthesis; siroheme from sirohydrochlorin: step 1/1. Its pathway is porphyrin-containing compound metabolism; siroheme biosynthesis; sirohydrochlorin from precorrin-2: step 1/1. Its function is as follows. Multifunctional enzyme that catalyzes the SAM-dependent methylations of uroporphyrinogen III at position C-2 and C-7 to form precorrin-2 via precorrin-1. Then it catalyzes the NAD-dependent ring dehydrogenation of precorrin-2 to yield sirohydrochlorin. Finally, it catalyzes the ferrochelation of sirohydrochlorin to yield siroheme. The sequence is that of Siroheme synthase from Actinobacillus pleuropneumoniae serotype 7 (strain AP76).